A 484-amino-acid polypeptide reads, in one-letter code: Catalase (484 aa).

Met-53 is modified (methionine sulfone). Active-site residues include His-54 and Asn-127. Tyr-337 provides a ligand contact to heme.

In terms of assembly, homotetramer. Heme serves as cofactor. NADP(+) is required as a cofactor.

It localises to the cytoplasm. The catalysed reaction is 2 H2O2 = O2 + 2 H2O. In terms of biological role, decomposes hydrogen peroxide into water and oxygen; serves to protect cells from the toxic effects of hydrogen peroxide. This is Catalase (katA) from Proteus mirabilis.